Consider the following 478-residue polypeptide: Pyruvate kinase (478 aa).

Arg-36 lines the substrate pocket. Asn-38, Ser-40, and Asp-70 together coordinate K(+). Position 38–41 (38–41 (NFSH)) interacts with ATP. Arg-77 and Lys-160 together coordinate ATP. Glu-225 contributes to the Mg(2+) binding site. Substrate is bound by residues Gly-251, Asp-252, and Thr-284. Asp-252 contacts Mg(2+).

Belongs to the pyruvate kinase family. In terms of assembly, homotetramer. It depends on Mg(2+) as a cofactor. The cofactor is K(+).

It carries out the reaction pyruvate + ATP = phosphoenolpyruvate + ADP + H(+). It participates in carbohydrate degradation; glycolysis; pyruvate from D-glyceraldehyde 3-phosphate: step 5/5. With respect to regulation, allosterically activated by AMP and by several sugar phosphates. Belongs to type II PK. This is Pyruvate kinase (pykA) from Haemophilus influenzae (strain ATCC 51907 / DSM 11121 / KW20 / Rd).